The sequence spans 95 residues: Cell division topological specificity factor (95 aa).

The protein belongs to the MinE family.

Prevents the cell division inhibition by proteins MinC and MinD at internal division sites while permitting inhibition at polar sites. This ensures cell division at the proper site by restricting the formation of a division septum at the midpoint of the long axis of the cell. The protein is Cell division topological specificity factor of Trichodesmium erythraeum (strain IMS101).